The following is an 834-amino-acid chain: MAHETSFNDALDYIYIANSMNDRAFLIAEPHPEQPNVDGQDQDDAELEELDDMAVTDDGQLEDTNNNNNSKRYYSSGKRRADFIGSLALKPPPTDVNTTTTTAGSPLATAALAAAAASASVAAAAARITAKAAHRALTTKQDATSSPASSPALQLIDMDNNYTNVAVGLGAMLLNDTLLLEGNDSSLFGEMLANRSGQLDLINGTGGLNVTTSKVAEDDFTQLLRMAVTSVLLGLMILVTIIGNVFVIAAIILERNLQNVANYLVASLAVADLFVACLVMPLGAVYEISQGWILGPELCDIWTSCDVLCCTASILHLVAIAVDRYWAVTNIDYIHSRTSNRVFMMIFCVWTAAVIVSLAPQFGWKDPDYLQRIEQQKCMVSQDVSYQVFATCCTFYVPLLVILALYWKIYQTARKRIHRRRPRPVDAAVNNNQPDGGAATDTKLHRLRLRLGRFSTAKSKTGSAVGVSGPASGGRALGLVDGNSTNTVNTVEDTEFSSSNVDSKSRAGVEAPSTSGNQIATVSHLVALAKQQGKSTAKSSAAVNGMAPSGRQEDDGQRPEHGEQEDREELEDQDEQVGPQPTTATSATTAAGTNESEDQCKANGVEVLEDPQLQQQLEQVQQLQKSVKSGGGGGASTSNATTITSISALSPQTPTSQGVGIAAAAAGPMTAKTSTLTSCNQSHPLCGTANESPSTPEPRSRQPTTPQQQPHQQAHQQQQQQQQLSSIANPMQKVNKRKETLEAKRERKAAKTLAIITGAFVVCWLPFFVMALTMPLCAACQISDSVASLFLWLGYFNSTLNPVIYTIFSPEFRQAFKRILFGGHRPVHYRSGKL.

The Extracellular portion of the chain corresponds to 1-230; that stretch reads MAHETSFNDA…TQLLRMAVTS (230 aa). The interval 56–75 is disordered; that stretch reads TDDGQLEDTNNNNNSKRYYS. Asn68, Asn97, Asn161, Asn175, Asn183, Asn194, Asn203, and Asn209 each carry an N-linked (GlcNAc...) asparagine glycan. The chain crosses the membrane as a helical span at residues 231-253; sequence VLLGLMILVTIIGNVFVIAAIIL. The Cytoplasmic segment spans residues 254 to 263; the sequence is ERNLQNVANY. A helical transmembrane segment spans residues 264–285; the sequence is LVASLAVADLFVACLVMPLGAV. Topologically, residues 286–300 are extracellular; it reads YEISQGWILGPELCD. A disulfide bond links Cys299 and Cys378. Residues 301–322 traverse the membrane as a helical segment; that stretch reads IWTSCDVLCCTASILHLVAIAV. The Cytoplasmic portion of the chain corresponds to 323-341; sequence DRYWAVTNIDYIHSRTSNR. Residues 342–364 form a helical membrane-spanning segment; sequence VFMMIFCVWTAAVIVSLAPQFGW. Topologically, residues 365-391 are extracellular; it reads KDPDYLQRIEQQKCMVSQDVSYQVFAT. Residues 392–413 traverse the membrane as a helical segment; the sequence is CCTFYVPLLVILALYWKIYQTA. Topologically, residues 414–752 are cytoplasmic; the sequence is RKRIHRRRPR…AKRERKAAKT (339 aa). 5 disordered regions span residues 420-442, 460-516, 531-599, 617-640, and 674-743; these read RRPR…ATDT, KTGS…STSG, QQGK…SEDQ, LEQV…TSNA, and STLT…TLEA. Composition is skewed to polar residues over residues 482-502 and 532-542; these read GNST…SNVD and QGKSTAKSSAA. Basic and acidic residues predominate over residues 551-564; the sequence is RQEDDGQRPEHGEQ. The span at 565-575 shows a compositional bias: acidic residues; the sequence is EDREELEDQDE. Low complexity predominate over residues 582 to 593; that stretch reads TTATSATTAAGT. Positions 674–694 are enriched in polar residues; it reads STLTSCNQSHPLCGTANESPS. Positions 702 to 723 are enriched in low complexity; the sequence is QPTTPQQQPHQQAHQQQQQQQQ. The helical transmembrane segment at 753 to 776 threads the bilayer; it reads LAIITGAFVVCWLPFFVMALTMPL. Topologically, residues 777-785 are extracellular; sequence CAACQISDS. The helical transmembrane segment at 786 to 808 threads the bilayer; sequence VASLFLWLGYFNSTLNPVIYTIF. The Cytoplasmic segment spans residues 809–834; it reads SPEFRQAFKRILFGGHRPVHYRSGKL.

It belongs to the G-protein coupled receptor 1 family.

The protein resides in the cell membrane. Its function is as follows. This is one of the several different receptors for 5-hydroxytryptamine (serotonin), a biogenic hormone that functions as a neurotransmitter, a hormone, and a mitogen. The activity of this receptor is mediated by G proteins which inhibit adenylate cyclase. This chain is 5-hydroxytryptamine receptor 2A (5-HT1A), found in Drosophila melanogaster (Fruit fly).